We begin with the raw amino-acid sequence, 52 residues long: Large ribosomal subunit protein bL32c (52 aa).

The protein belongs to the bacterial ribosomal protein bL32 family.

The protein resides in the plastid. The protein localises to the chloroplast. The chain is Large ribosomal subunit protein bL32c from Morus indica (Mulberry).